Reading from the N-terminus, the 115-residue chain is NADH-ubiquinone oxidoreductase chain 3 (115 aa).

A run of 3 helical transmembrane segments spans residues 4 to 24 (IMAM…AFWL), 55 to 75 (FFLV…LLPL), and 84 to 104 (MFLT…GLAY).

Belongs to the complex I subunit 3 family. Core subunit of respiratory chain NADH dehydrogenase (Complex I) which is composed of 45 different subunits. Interacts with TMEM186. Interacts with TMEM242.

It is found in the mitochondrion inner membrane. It catalyses the reaction a ubiquinone + NADH + 5 H(+)(in) = a ubiquinol + NAD(+) + 4 H(+)(out). Core subunit of the mitochondrial membrane respiratory chain NADH dehydrogenase (Complex I) which catalyzes electron transfer from NADH through the respiratory chain, using ubiquinone as an electron acceptor. Essential for the catalytic activity of complex I. The polypeptide is NADH-ubiquinone oxidoreductase chain 3 (Phyllotis darwinii (Darwin's leaf-eared mouse)).